Reading from the N-terminus, the 230-residue chain is Endonuclease NucS (230 aa).

The protein belongs to the NucS endonuclease family.

Its subcellular location is the cytoplasm. In terms of biological role, cleaves both 3' and 5' ssDNA extremities of branched DNA structures. The chain is Endonuclease NucS from Corynebacterium glutamicum (strain ATCC 13032 / DSM 20300 / JCM 1318 / BCRC 11384 / CCUG 27702 / LMG 3730 / NBRC 12168 / NCIMB 10025 / NRRL B-2784 / 534).